The chain runs to 436 residues: Antilisterial bacteriocin subtilosin biosynthesis protein AlbD (436 aa).

10 helical membrane-spanning segments follow: residues 27 to 47, 55 to 75, 113 to 133, 134 to 154, 164 to 184, 187 to 207, 240 to 260, 270 to 290, 315 to 335, and 395 to 415; these read IAAGLVILAVFEIGLIRQAGI, TYIILALLLMNTYMVFLSVTS, LFFFILPLFLFGNGTLSGAQT, LFWLGRFSFFTVYSIIFGVVL, LMFLLHAAIFACVCISAALMP, TIPLCAVHILWAVVIDFPVFL, AMLLNYAVMAVFSGFFSFQMM, IYIVISALLLICSPIALLYSI, FYSGLLAGGFLLVVMIVGFIS, and AILAGTAVSLAVIPIAGLVIV.

The protein resides in the cell membrane. Functionally, involved in the production of the bacteriocin subtilosin. Required for immunity to subtilosin. The polypeptide is Antilisterial bacteriocin subtilosin biosynthesis protein AlbD (albD) (Bacillus subtilis (strain 168)).